We begin with the raw amino-acid sequence, 1205 residues long: Transcriptional-regulating factor 1 (1205 aa).

6 disordered regions span residues 201–226 (YQQV…VGQH), 270–317 (YPQP…QRQS), 332–351 (QHLQ…SYHR), 390–500 (PQSH…QTKG), 527–583 (LNGH…PEAE), and 601–629 (PKPS…MSDD). Low complexity-rich tracts occupy residues 291–317 (QQQQ…QRQS) and 332–342 (QHLQEQQQPSM). Polar residues-rich tracts occupy residues 406 to 417 (KTYSSDRQTPAM), 437 to 447 (SEMTRVTSTLP), and 487 to 498 (QSGSPESSSGQT). Phosphoserine is present on S490. The C2H2-type 1 zinc-finger motif lies at 512-534 (LTCSICLKEFKSLPALNGHMRSH). Residues 551-579 (APPPQPQPQPQPQQPLPPPPPPPPPPQLP) show a composition bias toward pro residues. Residues 604-613 (SSQGFTNSVA) are compositionally biased toward polar residues. N6-acetyllysine occurs at positions 639 and 646. T773 is modified (phosphothreonine). An ELM2 domain is found at 785-876 (PRINIGLRFQ…ATLEMLLLRK (92 aa)). The 52-residue stretch at 891 to 942 (AGSDKWTSLERKLFNKALATYSKDFIFVQKMVKSKTVAQCVEYYYTWKKIMR) folds into the SANT domain. The segment covering 956 to 975 (DDCMTSEEEEEAEEEEEDPE) has biased composition (acidic residues). Disordered stretches follow at residues 956–1016 (DDCM…QQPS) and 1043–1087 (HGGT…GETD). T960 carries the phosphothreonine modification. The residue at position 961 (S961) is a Phosphoserine. A compositionally biased stretch (basic and acidic residues) spans 976–990 (EDRKSIKEEESEVAK). The C2H2-type 2 zinc finger occupies 1019–1043 (FICEMPNCGAVFSSRQALNGHARIH). Low complexity predominate over residues 1072–1086 (SVKSSPSHSTTSGET). The C2H2-type 3 zinc-finger motif lies at 1092–1114 (FPCKECGKVFFKIKSRNAHMKTH).

As to quaternary structure, interacts with CREBBP and EP300. Interacts with DNTTIP1 and DNTT. In terms of tissue distribution, highly expressed in kidney, lung and brain. In the brain, expression was seen in the basal ganglia, hippocampus, piriform cortex, cerebral cortex, ventromedial nucleus of the hypothalamus and the dorsal and superior central nuclei of the raphe.

It localises to the nucleus. Its function is as follows. Binds DNA and activates transcription of CYP11A1. Interaction with CREBBP and EP300 results in a synergistic transcriptional activation of CYP11A1. This is Transcriptional-regulating factor 1 (Trerf1) from Mus musculus (Mouse).